Reading from the N-terminus, the 99-residue chain is Putative protein adenylyltransferase MJ0141 (99 aa).

A GSX(10)DXD motif motif is present at residues 29 to 43; it reads GSYARGDYDEESDVD. The Mg(2+) site is built by Asp-41 and Asp-43.

The protein belongs to the MntA antitoxin family. The cofactor is Mg(2+).

The enzyme catalyses L-tyrosyl-[protein] + ATP = O-(5'-adenylyl)-L-tyrosyl-[protein] + diphosphate. The catalysed reaction is O-(5'-adenylyl)-L-tyrosyl-[protein] + ATP = O-[5'-(adenylyl-(5'-&gt;3')-adenylyl)]-L-tyrosyl-[protein] + diphosphate. In terms of biological role, putative antitoxin component of a putative type VII toxin-antitoxin (TA) system. Its cognate toxin might be MF0142, which it might AMPylate. The sequence is that of Putative protein adenylyltransferase MJ0141 from Methanocaldococcus jannaschii (strain ATCC 43067 / DSM 2661 / JAL-1 / JCM 10045 / NBRC 100440) (Methanococcus jannaschii).